The sequence spans 894 residues: Protein SEY1 homolog (894 aa).

Low complexity-rich tracts occupy residues 1-10 (MSEEITTNQT) and 36-48 (VQEQQEQQQQEQQ). Positions 1–97 (MSEEITTNQT…QKQQTQEQEH (97 aa)) are disordered. Topologically, residues 1–800 (MSEEITTNQT…EQNRLTSGGG (800 aa)) are cytoplasmic. Positions 21-60 (RLSNENIKQEDEEQQVQEQQEQQQQEQQEQIDDQDTQQQE) form a coiled coil. Residues 49-65 (EQIDDQDTQQQEDEFVV) are compositionally biased toward acidic residues. A compositionally biased stretch (low complexity) spans 78 to 93 (TPTLQETPQQQKQQTQ). The GB1/RHD3-type G domain occupies 138–361 (GFDYSVISIL…ADSFIPKRKY (224 aa)). 148 to 155 (GPQSSGKS) contacts GTP. A helical membrane pass occupies residues 801–821 (VPGYMIILLCVLGFNEFISII). At 822-824 (SSP) the chain is on the lumenal side. Residues 825–845 (LLLLLTILLGGVGFVLFKLGL) form a helical membrane-spanning segment. Over 846–894 (AGPFIDYSSQILVHFISKVKDIVLHVEQLQEQNHNNNNNNNNTPKQKRE) the chain is Cytoplasmic.

The protein belongs to the TRAFAC class dynamin-like GTPase superfamily. GB1/RHD3 GTPase family. RHD3 subfamily.

The protein resides in the endoplasmic reticulum membrane. Its function is as follows. Probable GTP-binding protein that may be involved in cell development. This is Protein SEY1 homolog from Dictyostelium discoideum (Social amoeba).